The chain runs to 647 residues: Neutral endopeptidase (647 aa).

The 647-residue stretch at 1–647 (MRRYLAVRGG…LDPEDRITIW (647 aa)) folds into the Peptidase M13 domain. Residue histidine 496 coordinates Zn(2+). Glutamate 497 is an active-site residue. Zn(2+)-binding residues include histidine 500 and glutamate 556. The Proton donor role is filled by aspartate 560.

The protein belongs to the peptidase M13 family. Requires Zn(2+) as cofactor.

The sequence is that of Neutral endopeptidase (pepO) from Lactobacillus helveticus (Lactobacillus suntoryeus).